A 258-amino-acid chain; its full sequence is Imidazole glycerol phosphate synthase subunit HisF (258 aa).

Catalysis depends on residues aspartate 11 and aspartate 130.

The protein belongs to the HisA/HisF family. In terms of assembly, heterodimer of HisH and HisF.

Its subcellular location is the cytoplasm. It catalyses the reaction 5-[(5-phospho-1-deoxy-D-ribulos-1-ylimino)methylamino]-1-(5-phospho-beta-D-ribosyl)imidazole-4-carboxamide + L-glutamine = D-erythro-1-(imidazol-4-yl)glycerol 3-phosphate + 5-amino-1-(5-phospho-beta-D-ribosyl)imidazole-4-carboxamide + L-glutamate + H(+). It functions in the pathway amino-acid biosynthesis; L-histidine biosynthesis; L-histidine from 5-phospho-alpha-D-ribose 1-diphosphate: step 5/9. Functionally, IGPS catalyzes the conversion of PRFAR and glutamine to IGP, AICAR and glutamate. The HisF subunit catalyzes the cyclization activity that produces IGP and AICAR from PRFAR using the ammonia provided by the HisH subunit. The polypeptide is Imidazole glycerol phosphate synthase subunit HisF (Yersinia pseudotuberculosis serotype O:1b (strain IP 31758)).